The sequence spans 638 residues: Voltage-gated potassium channel KCNC2 (638 aa).

Residues 1 to 229 (MGKIENNERV…EDPYSSRAAR (229 aa)) are Cytoplasmic-facing. The tract at residues 47 to 75 (LTAAGDKLQPLPPPLSPPPRPPPLSPVPS) is disordered. A compositionally biased stretch (pro residues) spans 56-72 (PLPPPLSPPPRPPPLSP). Residues histidine 124, cysteine 130, cysteine 151, and cysteine 152 each contribute to the Zn(2+) site. The chain crosses the membrane as a helical span at residues 230–248 (FIAFASLFFILVSITTFCL). N-linked (GlcNAc...) asparagine glycosylation is found at asparagine 259 and asparagine 266. A helical membrane pass occupies residues 284–303 (YVEGVCVVWFTFEFLVRIVF). Topologically, residues 304 to 314 (SPNKLEFIKNL) are cytoplasmic. Residues 315-337 (LNIIDFVAILPFYLEVGLSGLSS) form a helical membrane-spanning segment. Residues 346-368 (FLRVVRFVRILRIFKLTRHFVGL) form a helical; Voltage-sensor membrane-spanning segment. The Cytoplasmic portion of the chain corresponds to 369-381 (RVLGHTLRASTNE). A helical transmembrane segment spans residues 382–401 (FLLLIIFLALGVLIFATMIY). K(+) contacts are provided by threonine 437, leucine 438, glycine 439, and tyrosine 440. The Selectivity filter signature appears at 437–442 (TLGYGD). The chain crosses the membrane as a helical span at residues 451–473 (MLVGALCALAGVLTIAMPVPVIV). The Cytoplasmic portion of the chain corresponds to 474–638 (NNFGMYYSLA…RSRSPIPSIL (165 aa)). A disordered region spans residues 538 to 572 (SVLSGDDSTGSEPPLSPPERLPIRRSSTRDKNRRG). At serine 564 the chain carries Phosphoserine; by PKA. Residue serine 600 is modified to Phosphoserine.

It belongs to the potassium channel family. C (Shaw) (TC 1.A.1.2) subfamily. Kv3.2/KCNC2 sub-subfamily. In terms of assembly, homotetramer and heterotetramer with other channel-forming alpha subunits, such as KCNC1. Interacts with KCNC1. Homotetramer or heterotetramer channel activity is regulated by association with modulating ancillary subunits such as KCNE1, KCNE2 and KCNE3, creating a functionally diverse range of channel complexes. Interacts with KCNE1, KCNE2 and KCNE3. Phosphorylated by PKA in cortical synaptosomes. cAMP-dependent phosphorylation inhibits channel activity. Histamine H2 receptor- and PKA-induced phosphorylation extends action potential spike duration, reduces action potential spike amplitude, sustains maximum firing frequency in hippocampal interneurons; also reduces the incidence of high-frequency oscillations in hippocampal CA3 pyramidal cell layers. In terms of tissue distribution, expressed in neurons of the visual cortex during postnatal development. Expressed in neurons of the globus pallidus at postnatal age day 7 (P7), onward. Expressed in thalamic relay neurons. Expressed in neurons in layer IV and deeper cortical layers of the neocortex. Expressed in hippocampal interneurons. Expressed in nonpyramidal interneurons in the basolateral amygdala. Expressed in retinal ganglion cells (at protein level). Widely expressed in the brain. Expressed in numerous thalamic relay neurons throughout the dorsal thalamus. Expressed in interneurons of the deep layers V-VI of the cerebral cortex, the CA1 and CA3 pyramidal and dentate gyrus (DG) granule cells of the hippocampus, in neurons of the caudate-putamen, globus pallidus and subthalamic nucleus. Also expressed in the optic layer of interior colliculus, the inferior colliculus, the red nucleus, the medial geniculate, the ventral lateral lemiscus, the reticulotegmental nucleus and in the deep cerebellar nuclei. Expressed in globus pallidus (GP) neurons.

It is found in the cell membrane. Its subcellular location is the membrane. The protein resides in the perikaryon. The protein localises to the cell projection. It localises to the axon. It is found in the synapse. Its subcellular location is the synaptosome. The protein resides in the dendrite. The protein localises to the postsynaptic cell membrane. It localises to the presynaptic cell membrane. It is found in the apical cell membrane. Its subcellular location is the basolateral cell membrane. The enzyme catalyses K(+)(in) = K(+)(out). Its activity is regulated as follows. Inhibited by Stichodactyla helianthus peptide ShK. Inhibited by millimolar levels of tetraethylammonium (TEA). Contrary to other channels, inhibited only by millimolar levels of 4-aminopyridine (4-AP). In terms of biological role, voltage-gated potassium channel that mediates transmembrane potassium transport in excitable membranes, primarily in the brain. Contributes to the regulation of the fast action potential repolarization and in sustained high-frequency firing in neurons of the central nervous system. Homotetramer channels mediate delayed-rectifier voltage-dependent potassium currents that activate rapidly at high-threshold voltages and inactivate slowly. Forms tetrameric channels through which potassium ions pass in accordance with their electrochemical gradient. The channel alternates between opened and closed conformations in response to the voltage difference across the membrane. Can form functional homotetrameric channels and heterotetrameric channels that contain variable proportions of KCNC1, and possibly other family members as well; channel properties depend on the type of alpha subunits that are part of the channel. Channel properties may be modulated either by the association with ancillary subunits, such as KCNE1, KCNE2 and KCNE3 or indirectly by nitric oxide (NO) through a cGMP- and PKG-mediated signaling cascade, slowing channel activation and deactivation of delayed rectifier potassium channels. Contributes to fire sustained trains of very brief action potentials at high frequency in retinal ganglion cells, thalamocortical and suprachiasmatic nucleus (SCN) neurons and in hippocampal and neocortical interneurons. Sustained maximal action potential firing frequency in inhibitory hippocampal interneurons is negatively modulated by histamine H2 receptor activation in a cAMP- and protein kinase (PKA) phosphorylation-dependent manner. Plays a role in maintaining the fidelity of synaptic transmission in neocortical GABAergic interneurons by generating action potential (AP) repolarization at nerve terminals, thus reducing spike-evoked calcium influx and GABA neurotransmitter release. Required for long-range synchronization of gamma oscillations over distance in the neocortex. Contributes to the modulation of the circadian rhythm of spontaneous action potential firing in suprachiasmatic nucleus (SCN) neurons in a light-dependent manner. The chain is Voltage-gated potassium channel KCNC2 from Rattus norvegicus (Rat).